We begin with the raw amino-acid sequence, 510 residues long: Bone morphogenetic protein 6 (510 aa).

A signal peptide spans 1-20 (MPGLGRRAQWLCWWWGLLCS). Residues 21–371 (CGPPPLRPPL…VSEVHVRTTR (351 aa)) constitute a propeptide that is removed on maturation. 2 disordered regions span residues 87-129 (PHRP…RLKS) and 143-199 (NDDE…PLTS). The span at 106-116 (PQQQQQQQQQQ) shows a compositional bias: low complexity. N-linked (GlcNAc...) asparagine glycosylation is found at N238, N266, N383, N401, and N451. Residues 370–402 (TRSASSRRRQQSRNRSTQSQDVSRGSGSSDYNG) form a disordered region. Residues 390–401 (DVSRGSGSSDYN) are compositionally biased toward polar residues. 3 disulfides stabilise this stretch: C409/C475, C438/C507, and C442/C509.

The protein belongs to the TGF-beta family. Interacts with SOSTDC1. Interacts (when glycosylated) with type I receptor ACVR1; the interaction may induce HAMP expression. Interacts with type II receptor ACVR2B. Interacts with Hemojuvelin/HJV. Interacts with ERFE; the interaction inhibits BMP-induced transcription of HAMP. Interacts with BMPR1A/ALK3. Forms heterodimers with BMP2 in vitro; the heterodimer then binds to its receptor BMPR1A /ALK3 and may induce HAMP expression. As to expression, expressed in the lung. Low levels seen in the kidney.

Its subcellular location is the secreted. Growth factor of the TGF-beta superfamily that plays essential roles in many developmental processes including cartilage and bone formation. Also plays an important role in the regulation of HAMP/hepcidin expression and iron metabolism by acting as a ligand for hemojuvelin/HJV. Also acts to promote expression of HAMP, potentially via the interaction with its receptor BMPR1A/ALK3. Initiates the canonical BMP signaling cascade by associating with type I receptor ACVR1 and type II receptor ACVR2B. In turn, ACVR1 propagates signal by phosphorylating SMAD1/5/8 that travel to the nucleus and act as activators and repressors of transcription of target. Can also signal through non-canonical pathway such as TAZ-Hippo signaling cascade to modulate VEGF signaling by regulating VEGFR2 expression. In Mus musculus (Mouse), this protein is Bone morphogenetic protein 6 (Bmp6).